Consider the following 293-residue polypeptide: Elongation factor Ts (293 aa).

Residues 80 to 83 (TDFV) are involved in Mg(2+) ion dislocation from EF-Tu.

This sequence belongs to the EF-Ts family.

It is found in the cytoplasm. Its function is as follows. Associates with the EF-Tu.GDP complex and induces the exchange of GDP to GTP. It remains bound to the aminoacyl-tRNA.EF-Tu.GTP complex up to the GTP hydrolysis stage on the ribosome. The sequence is that of Elongation factor Ts from Herminiimonas arsenicoxydans.